A 584-amino-acid polypeptide reads, in one-letter code: Alpha-glucosidase MAL32 (584 aa).

The active-site Nucleophile is the Asp214. The active-site Proton donor is the Glu276.

Belongs to the glycosyl hydrolase 13 family.

It catalyses the reaction Hydrolysis of terminal, non-reducing (1-&gt;4)-linked alpha-D-glucose residues with release of alpha-D-glucose.. The protein is Alpha-glucosidase MAL32 (MAL32) of Saccharomyces cerevisiae (strain ATCC 204508 / S288c) (Baker's yeast).